Reading from the N-terminus, the 279-residue chain is Reaction center protein L chain (279 aa).

Transmembrane regions (helical) follow at residues 33–56 (GFFGVTTLFFSVLGTALIIWGASQ), 85–113 (GLWQIITVCAIGAFVSWALREVEICRKLG), and 116–141 (YHVPIAFSFAILAYVTLVVIRPILMG). (7R,8Z)-bacteriochlorophyll b is bound by residues His-154 and His-174. A helical transmembrane segment spans residues 171 to 200 (NPAHMLAITFFFTTTLAMSMHGGLILSAAN). Fe cation is bound at residue His-191. An a ubiquinone-binding site is contributed by Phe-217. The helical transmembrane segment at 226-252 (GSLGIHRLGLFLALSAAFWSAVCIVIS) threads the bilayer. His-231 serves as a coordination point for Fe cation.

This sequence belongs to the reaction center PufL/M/PsbA/D family. As to quaternary structure, reaction center is composed of four bacteriochlorophylls, two bacteriopheophytins, two ubiquinones, one iron, and three highly hydrophobic polypeptide chains (designated L, M, and H).

The protein localises to the cell inner membrane. Functionally, the reaction center is a membrane-bound complex that mediates the initial photochemical event in the electron transfer process of photosynthesis. This is Reaction center protein L chain (pufL) from Rubrivivax gelatinosus (strain NBRC 100245 / IL144).